We begin with the raw amino-acid sequence, 471 residues long: Probable flavin-containing monoamine oxidase B (471 aa).

Cys406 carries the S-8alpha-FAD cysteine modification.

It belongs to the flavin monoamine oxidase family. Requires FAD as cofactor.

The catalysed reaction is a secondary aliphatic amine + O2 + H2O = a primary amine + an aldehyde + H2O2. In Dictyostelium discoideum (Social amoeba), this protein is Probable flavin-containing monoamine oxidase B (maoB-1).